The sequence spans 581 residues: DNA primase (581 aa).

The segment at 40–64 (CPFHNEKTPSFTVNGEKQFYHCFGC) adopts a CHC2-type zinc-finger fold. One can recognise a Toprim domain in the interval 259 to 341 (QRLLVVEGYM…GRQVRFMFLP (83 aa)). Residues glutamate 265, aspartate 309, and aspartate 311 each coordinate Mg(2+).

Belongs to the DnaG primase family. In terms of assembly, monomer. Interacts with DnaB. The cofactor is Zn(2+). Requires Mg(2+) as cofactor.

The catalysed reaction is ssDNA + n NTP = ssDNA/pppN(pN)n-1 hybrid + (n-1) diphosphate.. In terms of biological role, RNA polymerase that catalyzes the synthesis of short RNA molecules used as primers for DNA polymerase during DNA replication. This chain is DNA primase, found in Salmonella typhimurium (strain LT2 / SGSC1412 / ATCC 700720).